Consider the following 383-residue polypeptide: Phosphoenolpyruvate/phosphate translocator 2, chloroplastic (383 aa).

A chloroplast-targeting transit peptide spans 1–55; it reads MFALTFLNPNPRLPSPLFLAKSTPESALSRRSRAFSSSNSYPWRPNLRFNGFKLK. Helical transmembrane passes span 76-96, 108-128, 143-163, 179-199, 210-232, 253-273, 299-319, and 350-369; these read GLKLGGMFGVWYLLNIYYNIF, ATVTAFQLGCGTLMIAIMWLL, VIVQLAVAHTLGNLLTNVSLG, FFTVLLSVLLLGEWPSLWIVC, LASFTEASFNWIGFCSAMASNVT, INLFSIITIISFILLVPLAIL, IMSLLAGVCLHSYQQVSYMIL, and VSPLNSIGTATALAGVYLYS. The 120-residue stretch at 93 to 212 folds into the EamA domain; that stretch reads YNIFNKQVLR…PIVAGVSLAS (120 aa).

It belongs to the TPT transporter family. PPT (TC 2.A.7.9) subfamily. In terms of tissue distribution, widely expressed in leaves throughout development. In flowers, expressed in sepals and pistils.

The protein localises to the plastid. It localises to the chloroplast membrane. Phosphoenolpyruvate/phosphate translocator that transports phosphoenolpyruvate (PEP), 2-phosphoglycerate and 3-phosphoglycerate. The chain is Phosphoenolpyruvate/phosphate translocator 2, chloroplastic (PPT2) from Arabidopsis thaliana (Mouse-ear cress).